A 101-amino-acid polypeptide reads, in one-letter code: MAKKSAIEKNNRRKALAARYAAKRAQLKAAAMDENLSLEERFKARLKLAELPRNSAPNRVRNRCEITGRPRAFYRKLKMSRIALREYGSRGQVPGLVKSSW.

This sequence belongs to the universal ribosomal protein uS14 family. Part of the 30S ribosomal subunit. Contacts proteins S3 and S10.

In terms of biological role, binds 16S rRNA, required for the assembly of 30S particles and may also be responsible for determining the conformation of the 16S rRNA at the A site. The protein is Small ribosomal subunit protein uS14 of Hyphomonas neptunium (strain ATCC 15444).